The sequence spans 274 residues: NH(3)-dependent NAD(+) synthetase (274 aa).

46–53 serves as a coordination point for ATP; that stretch reads GISGGQDS. Residue aspartate 52 participates in Mg(2+) binding. Position 140 (arginine 140) interacts with deamido-NAD(+). Residue threonine 160 participates in ATP binding. Glutamate 165 contacts Mg(2+). 2 residues coordinate deamido-NAD(+): lysine 173 and aspartate 180. Positions 189 and 211 each coordinate ATP. Position 260 to 261 (260 to 261) interacts with deamido-NAD(+); the sequence is HK.

Belongs to the NAD synthetase family. As to quaternary structure, homodimer.

It carries out the reaction deamido-NAD(+) + NH4(+) + ATP = AMP + diphosphate + NAD(+) + H(+). It participates in cofactor biosynthesis; NAD(+) biosynthesis; NAD(+) from deamido-NAD(+) (ammonia route): step 1/1. In terms of biological role, catalyzes the ATP-dependent amidation of deamido-NAD to form NAD. Uses ammonia as a nitrogen source. The polypeptide is NH(3)-dependent NAD(+) synthetase (Streptococcus pyogenes serotype M1).